The chain runs to 944 residues: Isoleucine--tRNA ligase (944 aa).

Positions 58–68 (PYANGSIHIGH) match the 'HIGH' region motif. Glutamate 563 lines the L-isoleucyl-5'-AMP pocket. Residues 604–608 (KMSKS) carry the 'KMSKS' region motif. Lysine 607 is an ATP binding site. The Zn(2+) site is built by cysteine 907, cysteine 910, cysteine 927, and cysteine 930.

It belongs to the class-I aminoacyl-tRNA synthetase family. IleS type 1 subfamily. As to quaternary structure, monomer. Requires Zn(2+) as cofactor.

It localises to the cytoplasm. It catalyses the reaction tRNA(Ile) + L-isoleucine + ATP = L-isoleucyl-tRNA(Ile) + AMP + diphosphate. Catalyzes the attachment of isoleucine to tRNA(Ile). As IleRS can inadvertently accommodate and process structurally similar amino acids such as valine, to avoid such errors it has two additional distinct tRNA(Ile)-dependent editing activities. One activity is designated as 'pretransfer' editing and involves the hydrolysis of activated Val-AMP. The other activity is designated 'posttransfer' editing and involves deacylation of mischarged Val-tRNA(Ile). This Salmonella typhimurium (strain LT2 / SGSC1412 / ATCC 700720) protein is Isoleucine--tRNA ligase.